The sequence spans 416 residues: Gamma-glutamyl phosphate reductase (416 aa).

This sequence belongs to the gamma-glutamyl phosphate reductase family.

It is found in the cytoplasm. It catalyses the reaction L-glutamate 5-semialdehyde + phosphate + NADP(+) = L-glutamyl 5-phosphate + NADPH + H(+). It functions in the pathway amino-acid biosynthesis; L-proline biosynthesis; L-glutamate 5-semialdehyde from L-glutamate: step 2/2. Its function is as follows. Catalyzes the NADPH-dependent reduction of L-glutamate 5-phosphate into L-glutamate 5-semialdehyde and phosphate. The product spontaneously undergoes cyclization to form 1-pyrroline-5-carboxylate. In Halalkalibacterium halodurans (strain ATCC BAA-125 / DSM 18197 / FERM 7344 / JCM 9153 / C-125) (Bacillus halodurans), this protein is Gamma-glutamyl phosphate reductase.